A 207-amino-acid polypeptide reads, in one-letter code: 8-oxoguanine DNA glycosylase/AP lyase (207 aa).

Residues Lys-129 and Asp-147 contribute to the active site.

This sequence belongs to the type-2 OGG1 family.

The enzyme catalyses 2'-deoxyribonucleotide-(2'-deoxyribose 5'-phosphate)-2'-deoxyribonucleotide-DNA = a 3'-end 2'-deoxyribonucleotide-(2,3-dehydro-2,3-deoxyribose 5'-phosphate)-DNA + a 5'-end 5'-phospho-2'-deoxyribonucleoside-DNA + H(+). Functionally, catalyzes the excision of an oxidatively damaged form of guanine (7,8-dihydro-8-oxoguanine = 8-oxoG) from DNA. Also cleaves the DNA backbone at apurinic/apyrimidinic sites (AP sites). This is 8-oxoguanine DNA glycosylase/AP lyase from Thermotoga sp. (strain RQ2).